The primary structure comprises 326 residues: MAVYTDVAADDLADFLKSYEIGDLLSYKGIAEGVENTNFLLHTTRGSFILTLYEKRVASEDLPYFLALMAHLAARGVSCPQPEKTRDGEICGALSGRPAVIINFLEGVWPRRPNAVHCAGVGEALAKMHLAGLDFPQHRANPLSVSGWRPLFDLAAARADEIQPGLRDFIAAELDHLEGRWPRHLPTGVIHADLFPDNVFFIGDTLSGLIDFPFSCNDILAYDVAICLNAWCFEPDHAFNVTKARALLNAYQRGRALSEAEQTALPLLARGAAMRFLLTRLVDVLDVPEGALVKPKDPLEYFRKLRFQQNVASIRDYGVEAAGAVA.

Belongs to the pseudomonas-type ThrB family.

It carries out the reaction L-homoserine + ATP = O-phospho-L-homoserine + ADP + H(+). Its pathway is amino-acid biosynthesis; L-threonine biosynthesis; L-threonine from L-aspartate: step 4/5. The protein is Homoserine kinase of Rhodopseudomonas palustris (strain HaA2).